Here is a 300-residue protein sequence, read N- to C-terminus: Ribosomal RNA small subunit methyltransferase H (300 aa).

Residues 43–45, Asp60, Asp105, and Gln112 each bind S-adenosyl-L-methionine; that span reads AGH.

Belongs to the methyltransferase superfamily. RsmH family.

It is found in the cytoplasm. The enzyme catalyses cytidine(1402) in 16S rRNA + S-adenosyl-L-methionine = N(4)-methylcytidine(1402) in 16S rRNA + S-adenosyl-L-homocysteine + H(+). In terms of biological role, specifically methylates the N4 position of cytidine in position 1402 (C1402) of 16S rRNA. The chain is Ribosomal RNA small subunit methyltransferase H from Deinococcus deserti (strain DSM 17065 / CIP 109153 / LMG 22923 / VCD115).